A 460-amino-acid chain; its full sequence is Argininosuccinate lyase (460 aa).

The protein belongs to the lyase 1 family. Argininosuccinate lyase subfamily.

The protein localises to the cytoplasm. It catalyses the reaction 2-(N(omega)-L-arginino)succinate = fumarate + L-arginine. It functions in the pathway amino-acid biosynthesis; L-arginine biosynthesis; L-arginine from L-ornithine and carbamoyl phosphate: step 3/3. This chain is Argininosuccinate lyase, found in Nitratidesulfovibrio vulgaris (strain ATCC 29579 / DSM 644 / CCUG 34227 / NCIMB 8303 / VKM B-1760 / Hildenborough) (Desulfovibrio vulgaris).